A 490-amino-acid chain; its full sequence is Histone-lysine N-methyltransferase Smyd1 (490 aa).

The SET domain occupies 7–253 (ENVEVFTSEG…EGEELTVSYI (247 aa)). An S-adenosyl-L-methionine-binding site is contributed by 17–19 (KGR). Positions 52, 55, 65, 68, 74, 78, 86, and 90 each coordinate Zn(2+). The segment at 52–90 (CHTCFKRQEKLHRCGQCKFAHYCDRTCQKDAWLNHKNEC) adopts an MYND-type zinc-finger fold. S-adenosyl-L-methionine-binding positions include histidine 135 and 205 to 206 (NH). Cysteine 208 lines the Zn(2+) pocket. 270 to 272 (YYF) lines the S-adenosyl-L-methionine pocket. The Zn(2+) site is built by cysteine 274, cysteine 276, and cysteine 279.

Belongs to the class V-like SAM-binding methyltransferase superfamily. In terms of assembly, interacts with HDAC1, HDAC2 and HDAC3. Interacts (via MYND-type zinc finger) with NACA isoform skNAC. Expressed in cardiac and skeletal muscle, lymphocytes and thymus.

The protein localises to the cytoplasm. It localises to the nucleus. The catalysed reaction is L-lysyl(4)-[histone H3] + 3 S-adenosyl-L-methionine = N(6),N(6),N(6)-trimethyl-L-lysyl(4)-[histone H3] + 3 S-adenosyl-L-homocysteine + 3 H(+). In terms of biological role, methylates histone H3 at 'Lys-4' (H3K4me). Acts as a transcriptional repressor. Essential for cardiomyocyte differentiation and cardiac morphogenesis. This chain is Histone-lysine N-methyltransferase Smyd1 (Smyd1), found in Mus musculus (Mouse).